The sequence spans 181 residues: Large ribosomal subunit protein uL5c (181 aa).

It belongs to the universal ribosomal protein uL5 family. In terms of assembly, part of the 50S ribosomal subunit; contacts the 5S rRNA.

Its subcellular location is the plastid. It is found in the chloroplast. Its function is as follows. Binds 5S rRNA, forms part of the central protuberance of the 50S subunit. This is Large ribosomal subunit protein uL5c (rpl5) from Pyropia yezoensis (Susabi-nori).